The following is a 314-amino-acid chain: NF-kappa-B inhibitor alpha (314 aa).

The segment at methionine 1–glutamate 41 is disordered. Over residues glycine 15 to glutamate 41 the composition is skewed to basic and acidic residues. Residue lysine 21 forms a Glycyl lysine isopeptide (Lys-Gly) (interchain with G-Cter in SUMO); alternate linkage. A Glycyl lysine isopeptide (Lys-Gly) (interchain with G-Cter in ubiquitin); alternate cross-link involves residue lysine 21. Lysine 22 is covalently cross-linked (Glycyl lysine isopeptide (Lys-Gly) (interchain with G-Cter in ubiquitin)). A Destruction motif motif is present at residues histidine 30 to serine 36. Serine 32 is modified (phosphoserine; by IKKA and IKKB). Serine 36 is subject to Phosphoserine; by IKKA, IKKB, IKKE and TBK1. At tyrosine 42 the chain carries Phosphotyrosine; by Tyr-kinases. Positions methionine 45–leucine 54 match the Nuclear export signal motif. The short motif at leucine 110–isoleucine 120 is the Nuclear import signal element. ANK repeat units lie at residues leucine 110–leucine 139, arginine 143–leucine 172, asparagine 182–alanine 211, and asparagine 216–arginine 245. Asparagine 210 and asparagine 244 each carry (3S)-3-hydroxyasparagine; by HIF1AN. Phosphoserine; by CK2 is present on residues serine 283 and serine 288. Threonine 291 carries the post-translational modification Phosphothreonine; by CK2. Serine 293 is subject to Phosphoserine; by CK2. Position 296 is a phosphothreonine (threonine 296).

This sequence belongs to the NF-kappa-B inhibitor family. In terms of assembly, interacts with RELA; the interaction requires the nuclear import signal. Part of a 70-90 kDa complex at least consisting of CHUK, IKBKB, NFKBIA, RELA, ELP1 and MAP3K14. Interacts with NKIRAS1 and NKIRAS2. Interacts with RWDD3; the interaction enhances sumoylation. Interacts with PRMT2. Interacts with PRKACA in platelets; this interaction is disrupted by thrombin and collagen. Interacts with MEFV. Interacts with DDRGK1; positively regulates NFKBIA phosphorylation and degradation. Interacts with HNRNPA2B1; the interaction may be mediated by the RRM2 domain of HNRNPA2B1, and HNRNPA2B1 may interact simultaneously with FAM76B and either NFKBIA or NFKBIE to form a complex. Post-translationally, phosphorylated at Ser-32 and Ser-36 by IKKA/CHUK and IKKB/IKBKB; disables inhibition of NF-kappa-B DNA-binding activity. Phosphorylation at positions 32 and 36 is prerequisite to recognition by the SCF(FBXW11) and SCF(BTRC) complexes, leading to polyubiquitination and subsequent degradation. Polyubiquitinated at Lys-21 and/or Lys-22 following phosphorylation at Ser-32 and Ser-36. Monoubiquitinated at Lys-21 and/or Lys-22 by UBE2D3. Ubiquitin chain elongation is then performed by CDC34 in cooperation with the SCF(FBXW11) E3 ligase complex, building ubiquitin chains from the UBE2D3-primed NFKBIA-linked ubiquitin. The resulting polyubiquitination leads to protein degradation. Also ubiquitinated by the SCF(BTRC) complex following stimulus-dependent phosphorylation at Ser-32 and Ser-36. Deubiquitinated by USP38, leading to NF-kappa-B inhibition. In terms of processing, sumoylated; sumoylation requires the presence of the nuclear import signal. Sumoylation blocks ubiquitination and proteasome-mediated degradation of the protein thereby increasing the protein stability. Post-translationally, hydroxylated by HIF1AN.

The protein resides in the cytoplasm. The protein localises to the nucleus. Functionally, inhibits the activity of dimeric NF-kappa-B/REL complexes by trapping REL (RELA/p65 and NFKB1/p50) dimers in the cytoplasm by masking their nuclear localization signals. On cellular stimulation by immune and pro-inflammatory responses, becomes phosphorylated promoting ubiquitination and degradation, enabling the dimeric RELA to translocate to the nucleus and activate transcription. This Sus scrofa (Pig) protein is NF-kappa-B inhibitor alpha (NFKBIA).